A 715-amino-acid chain; its full sequence is Fatty acid oxidation complex subunit alpha (715 aa).

Residues 1 to 194 (MHEQRAKPSA…RLGLVDDAVP (194 aa)) form an enoyl-CoA hydratase region. The 3-hydroxyacyl-CoA dehydrogenase stretch occupies residues 310–715 (HALHRIGILG…QGERFYPQGS (406 aa)).

It in the N-terminal section; belongs to the enoyl-CoA hydratase/isomerase family. The protein in the central section; belongs to the 3-hydroxyacyl-CoA dehydrogenase family. As to quaternary structure, heterotetramer of two alpha chains (FadJ) and two beta chains (FadI).

The protein resides in the cytoplasm. The enzyme catalyses a (3S)-3-hydroxyacyl-CoA = a (2E)-enoyl-CoA + H2O. It carries out the reaction a 4-saturated-(3S)-3-hydroxyacyl-CoA = a (3E)-enoyl-CoA + H2O. It catalyses the reaction a (3S)-3-hydroxyacyl-CoA + NAD(+) = a 3-oxoacyl-CoA + NADH + H(+). The catalysed reaction is (3S)-3-hydroxybutanoyl-CoA = (3R)-3-hydroxybutanoyl-CoA. Its pathway is lipid metabolism; fatty acid beta-oxidation. Catalyzes the formation of a hydroxyacyl-CoA by addition of water on enoyl-CoA. Also exhibits 3-hydroxyacyl-CoA epimerase and 3-hydroxyacyl-CoA dehydrogenase activities. This is Fatty acid oxidation complex subunit alpha from Serratia proteamaculans (strain 568).